Reading from the N-terminus, the 321-residue chain is Glucokinase (321 aa).

ATP is bound at residue 8-13 (GDVGGT).

The protein belongs to the bacterial glucokinase family.

It localises to the cytoplasm. The catalysed reaction is D-glucose + ATP = D-glucose 6-phosphate + ADP + H(+). The protein is Glucokinase of Salmonella arizonae (strain ATCC BAA-731 / CDC346-86 / RSK2980).